The chain runs to 289 residues: 7-methylguanosine phosphate-specific 5'-nucleotidase (289 aa).

Catalysis depends on Asp-38, which acts as the Nucleophile. Mg(2+)-binding residues include Asp-38 and Asp-40. Catalysis depends on Asp-40, which acts as the Proton donor. CMP is bound at residue Glu-85. Glu-85 is a N(7)-methyl-GMP binding site. Substrate-binding positions include 153–154 (SA) and Lys-202. Residue Asp-227 participates in Mg(2+) binding.

This sequence belongs to the pyrimidine 5'-nucleotidase family. As to quaternary structure, monomer.

It is found in the cytoplasm. The catalysed reaction is N(7)-methyl-GMP + H2O = N(7)-methylguanosine + phosphate. It carries out the reaction CMP + H2O = cytidine + phosphate. The enzyme catalyses a ribonucleoside 5'-phosphate + H2O = a ribonucleoside + phosphate. Functionally, specifically hydrolyzes 7-methylguanosine monophosphate (m(7)GMP) to 7-methylguanosine and inorganic phosphate. The specific activity for m(7)GMP may protect cells against undesired salvage of m(7)GMP and its incorporation into nucleic acids. Also has weak activity for CMP. UMP and purine nucleotides are poor substrates. The chain is 7-methylguanosine phosphate-specific 5'-nucleotidase (NT5C3B) from Gallus gallus (Chicken).